The following is a 330-amino-acid chain: Phenylalanine--tRNA ligase alpha subunit (330 aa).

Glutamate 246 serves as a coordination point for Mg(2+).

It belongs to the class-II aminoacyl-tRNA synthetase family. Phe-tRNA synthetase alpha subunit type 1 subfamily. Tetramer of two alpha and two beta subunits. Mg(2+) is required as a cofactor.

The protein resides in the cytoplasm. The catalysed reaction is tRNA(Phe) + L-phenylalanine + ATP = L-phenylalanyl-tRNA(Phe) + AMP + diphosphate + H(+). In Sulfurovum sp. (strain NBC37-1), this protein is Phenylalanine--tRNA ligase alpha subunit.